A 270-amino-acid polypeptide reads, in one-letter code: Glutamate racemase (270 aa).

Substrate contacts are provided by residues 15–16 and 47–48; these read DS and YG. The active-site Proton donor/acceptor is the cysteine 78. Residue 79–80 coordinates substrate; it reads NT. Cysteine 189 (proton donor/acceptor) is an active-site residue. Residue 190–191 participates in substrate binding; that stretch reads TH.

Belongs to the aspartate/glutamate racemases family.

It carries out the reaction L-glutamate = D-glutamate. Its pathway is cell wall biogenesis; peptidoglycan biosynthesis. Provides the (R)-glutamate required for cell wall biosynthesis. This is Glutamate racemase from Syntrophus aciditrophicus (strain SB).